A 145-amino-acid polypeptide reads, in one-letter code: Ribonuclease H (145 aa).

Residues 1-141 form the RNase H type-1 domain; the sequence is MQEVTIYSDG…ADALANRGVE (141 aa). Mg(2+)-binding residues include Asp-9, Glu-47, Asp-69, and Asp-133.

It belongs to the RNase H family. As to quaternary structure, monomer. Mg(2+) is required as a cofactor.

It localises to the cytoplasm. The enzyme catalyses Endonucleolytic cleavage to 5'-phosphomonoester.. Functionally, endonuclease that specifically degrades the RNA of RNA-DNA hybrids. In Cupriavidus necator (strain ATCC 17699 / DSM 428 / KCTC 22496 / NCIMB 10442 / H16 / Stanier 337) (Ralstonia eutropha), this protein is Ribonuclease H.